A 711-amino-acid chain; its full sequence is Ferric/cupric reductase transmembrane component 2 (711 aa).

An N-terminal signal peptide occupies residues 1 to 23 (MHWTSILSAILLFCLSGARASPA). The Extracellular portion of the chain corresponds to 24–164 (KTVIRNKVPL…GFYANLDVGN (141 aa)). Residues asparagine 85, asparagine 108, asparagine 120, and asparagine 134 are each glycosylated (N-linked (GlcNAc...) asparagine). The helical transmembrane segment at 165–185 (IYGGIICAYFVAIMAFAGVLH) threads the bilayer. Residues 186–235 (CMNYTPFKTVLLKQKLVGYVRGYLTLPTIGSKHASDFSYFRIFTGYLPTR) lie on the Cytoplasmic side of the membrane. A helical transmembrane segment spans residues 236–256 (LEGIIILGYLVLHTVFLAYGY). At 257-280 (EYDPENIIFKSRRVQVARYVADRS) the chain is on the extracellular side. Positions 280–414 (SGVLAFAHFP…SGIEWIYTAI (135 aa)) constitute a Ferric oxidoreductase domain. Residues 281–301 (GVLAFAHFPLIVLFAGRNNFL) form a helical membrane-spanning segment. Residues 302-317 (EYISGVKYTSFIMFHK) are Cytoplasmic-facing. Positions 316 and 330 each coordinate heme. The chain crosses the membrane as a helical span at residues 318–340 (WLGRMMFLDAMIHGSAYTSYTVA). The N-linked (GlcNAc...) asparagine glycan is linked to asparagine 341. Residues 341–353 (NKTWATSKNRLYW) lie on the Extracellular side of the membrane. The helical transmembrane segment at 354–374 (QFGVAALCLAGTMVFFSFAVF) threads the bilayer. Over 375–377 (RKY) the chain is Cytoplasmic. A helical transmembrane segment spans residues 378–398 (FYEAFLFLHIVLGAMFFYACW). Heme is bound by residues histidine 386 and histidine 400. Topologically, residues 399 to 400 (EH) are extracellular. A helical membrane pass occupies residues 401-423 (VVSLSGIEWIYTAIAIWIVDRII). The FAD-binding FR-type domain maps to 415 to 534 (AIWIVDRIIR…EGPYGSSSPV (120 aa)). Over 424–711 (RIIKASYFGF…IEYFEEYQCW (288 aa)) the chain is Cytoplasmic. 479–485 (HPFTVLD) lines the FAD pocket. NADP(+) is bound by residues 526–529 (GPYG) and 677–678 (CG).

It belongs to the ferric reductase (FRE) family. The cofactor is FAD. Requires heme as cofactor.

It is found in the cell membrane. The catalysed reaction is 2 a Fe(II)-siderophore + NADP(+) + H(+) = 2 a Fe(III)-siderophore + NADPH. In terms of biological role, metalloreductase responsible for reducing extracellular iron and copper prior to import. Catalyzes the reductive uptake of Fe(3+)-salts and Fe(3+) bound to catecholate or hydroxamate siderophores. Fe(3+) is reduced to Fe(2+), which then dissociates from the siderophore and can be imported by the high-affinity Fe(2+) transport complex in the plasma membrane. Also participates in Cu(2+) reduction and Cu(+) uptake. This chain is Ferric/cupric reductase transmembrane component 2 (FRE2), found in Saccharomyces cerevisiae (strain ATCC 204508 / S288c) (Baker's yeast).